The sequence spans 89 residues: Small ribosomal subunit protein uS14A (89 aa).

Belongs to the universal ribosomal protein uS14 family. In terms of assembly, part of the 30S ribosomal subunit. Contacts proteins S3 and S10.

In terms of biological role, binds 16S rRNA, required for the assembly of 30S particles and may also be responsible for determining the conformation of the 16S rRNA at the A site. The polypeptide is Small ribosomal subunit protein uS14A (Staphylococcus epidermidis (strain ATCC 35984 / DSM 28319 / BCRC 17069 / CCUG 31568 / BM 3577 / RP62A)).